We begin with the raw amino-acid sequence, 87 residues long: Toxin Cll4 (87 aa).

Positions 1–19 are cleaved as a signal peptide; that stretch reads MNSLLMITACLALIGTVWA. The 66-residue stretch at 20–85 folds into the LCN-type CS-alpha/beta domain; the sequence is KEGYIVNYHD…VWPLPKKRCN (66 aa). 4 disulfide bridges follow: Cys-31–Cys-84, Cys-35–Cys-60, Cys-44–Cys-65, and Cys-48–Cys-67. Asparagine amide is present on Asn-85.

It belongs to the long (4 C-C) scorpion toxin superfamily. Sodium channel inhibitor family. Beta subfamily. As to expression, expressed by the venom gland.

Its subcellular location is the secreted. Its function is as follows. Beta toxins bind voltage-independently at site-4 of sodium channels (Nav) and shift the voltage of activation toward more negative potentials thereby affecting sodium channel activation and promoting spontaneous and repetitive firing. This Centruroides limpidus (Mexican scorpion) protein is Toxin Cll4.